Reading from the N-terminus, the 96-residue chain is Large ribosomal subunit protein bL21 (96 aa).

It belongs to the bacterial ribosomal protein bL21 family. As to quaternary structure, part of the 50S ribosomal subunit. Contacts protein L20.

Its function is as follows. This protein binds to 23S rRNA in the presence of protein L20. The polypeptide is Large ribosomal subunit protein bL21 (Chlorobium chlorochromatii (strain CaD3)).